Reading from the N-terminus, the 298-residue chain is GTP cyclohydrolase FolE2 (298 aa).

This sequence belongs to the GTP cyclohydrolase IV family.

It catalyses the reaction GTP + H2O = 7,8-dihydroneopterin 3'-triphosphate + formate + H(+). The protein operates within cofactor biosynthesis; 7,8-dihydroneopterin triphosphate biosynthesis; 7,8-dihydroneopterin triphosphate from GTP: step 1/1. In terms of biological role, converts GTP to 7,8-dihydroneopterin triphosphate. In Pseudomonas paraeruginosa (strain DSM 24068 / PA7) (Pseudomonas aeruginosa (strain PA7)), this protein is GTP cyclohydrolase FolE2.